A 315-amino-acid polypeptide reads, in one-letter code: Initiation factor TFIIB homolog (315 aa).

This sequence belongs to the asfivirus C315R family.

Functionally, putative initation factor. The chain is Initiation factor TFIIB homolog from African swine fever virus (strain Badajoz 1971 Vero-adapted) (Ba71V).